Consider the following 867-residue polypeptide: Protein argonaute-3 (867 aa).

The interval 1-83 (MSGRGNLLSL…IDTLKTDDHT (83 aa)) is necessary and sufficient for interaction with krimp. The tract at residues 1 to 289 (MSGRGNLLSL…CDVSHRILCQ (289 aa)) is interaction with papi. A symmetric dimethylarginine mark is found at Arg4, Arg68, and Arg70. One can recognise a PAZ domain in the interval 291 to 402 (TVLEMLVDLY…LIPELCYLTG (112 aa)). A Piwi domain is found at 566 to 853 (MVVCICHNRR…LAYLIGQSIQ (288 aa)).

Belongs to the argonaute family. Piwi subfamily. In terms of assembly, component of the ping-pong piRNA processing (4P) complex consisting of krimp, aub and AGO3. Interacts (via N-terminus when not methylated on arginine residues) with krimp (via non-canonical tudor domain); this interaction leads to symmetrical dimethylation on AGO3 arginine residues and its subsequent dissociation from krimp. Krimp associated AGO3 is mostly free of piRNA binding and the interaction plays an important role in the loading of AGO3 with piRNAs; piRNA binding may stimulate dissociation of the two proteins. May form part of a piRNA processing complex consisting of tud, aub and AGO3. Interacts (when symmetrically dimethylated on arginine residues) with tud. Forms a complex with smg, twin, aub, nos mRNA and piRNAs that target the nos 3'-untranslated region, in early embryos. Interacts (via the N-terminal region when symmetrically methylated on arginine residues) with papi (via C-terminus); this interaction is RNA-independent and may be required for AGO3 localization to the nuage. Interacts with TER94 and tral. Symmetrically dimethylated on Arg-4, Arg-68 and Arg-70, most likely by csul/PRMT5/DART5. Methylation state probably functions as an indicator of its piRNA binding state. In terms of tissue distribution, in ovary, expressed in germline stem cells, germline cyst cells, nurse cells and oocytes during early stages. Also found in the somatic cap cells of the germarium. In testis, expressed in germline stem cells, primary gonial cells and early spermatocytes. No expression detected in the somatic hub cells at the apical tip of the testis (at protein level). Expressed in neurons throughout the adult brain and in the mushroom body subdivision in the peduncle. In the mushroom body, expressed only in gamma and core alpha-beta neurons.

Its subcellular location is the cytoplasm. The protein resides in the perinuclear region. The protein localises to the cytoplasmic ribonucleoprotein granule. Functionally, component of the perinuclear meiotic nuage, a germline-specific subcellular membraneless ribonucleoprotein compartment involved in production of transposable element-repressing Piwi-interacting RNA (piRNA)-induced silencing complexes (piRISCs), which are essential for maintaining germline integrity during oogenesis. Acts via the Piwi-interacting RNA (piRNA) metabolic process, which mediates the repression of transposable elements during meiosis by forming complexes composed of piRNAs and Piwi proteins and governs the methylation and subsequent repression of transposons. Piwi protein that directly binds piRNAs, a class of 24 to 30 nucleotide RNAs that are generated by a Dicer-independent mechanism and are primarily derived from transposons and other repeated sequence elements. Associates predominantly with sense piRNAs that contain adenine at nucleotide 10, but shows no preference for uridine at the 5' end. Shows RNA cleavage or slicer activity. Together with Piwi protein aub recruited to subregions of the perinuclear nuage by krimp, which coordinates their activity in the ping-pong amplification step of secondary piRNA biogenesis. Krimp recruits piRNA bound aub and unbound AGO3, bringing them into close proximity to facilitate the loading onto AGO3 of freshly cut piRNAs generated by aub cleavage of target sequences; krimp recognizes the piRNA loading state of the Piwi proteins via symmetrically dimethylated arginine modification in their N-terminus. Important for asymmetric ping-pong amplification to bias production towards antisense piRNAs capable of silencing transposable elements. In testis, associates with Su(Ste) and AT-chX-1 piRNAs mostly produced from antisense precursors. In the germline, acts to amplify pools of antisense piRNAs, among others Su(Ste), AT-chX-1 and roo, and to limit sense piRNA accumulation. Forms a complex with smg, twin, aub and specific piRNAs that targets nos mRNA (and probably other maternal mRNAS) for deadenylation promoting its decay during early embryogenesis. Involved in transposon silencing in the adult brain. This chain is Protein argonaute-3, found in Drosophila melanogaster (Fruit fly).